Here is a 348-residue protein sequence, read N- to C-terminus: Dihydroorotase (348 aa).

The Zn(2+) site is built by His17 and His19. Residues 19 to 21 (HLR) and Asn45 contribute to the substrate site. Residues Lys103, His140, and His178 each coordinate Zn(2+). An N6-carboxylysine modification is found at Lys103. His140 contributes to the substrate binding site. Leu223 lines the substrate pocket. Asp251 is a binding site for Zn(2+). Residue Asp251 is part of the active site. 2 residues coordinate substrate: His255 and Ala267.

Belongs to the metallo-dependent hydrolases superfamily. DHOase family. Class II DHOase subfamily. As to quaternary structure, homodimer. It depends on Zn(2+) as a cofactor.

The catalysed reaction is (S)-dihydroorotate + H2O = N-carbamoyl-L-aspartate + H(+). The protein operates within pyrimidine metabolism; UMP biosynthesis via de novo pathway; (S)-dihydroorotate from bicarbonate: step 3/3. Its function is as follows. Catalyzes the reversible cyclization of carbamoyl aspartate to dihydroorotate. This Yersinia pseudotuberculosis serotype O:1b (strain IP 31758) protein is Dihydroorotase.